We begin with the raw amino-acid sequence, 148 residues long: MVGPSRLAGGGLLLLLLLALLPLALDGKPAPPPQALPKDPAAASAAERIMRALLPDSKSSRPATDRMVHPEHQAGGGDTRRLQEPAKKGLLISCFDRRIDRISHTSDMGCRHRKDPPRAPPAAPSAAPLAVTWLIRDLRADSKQSRAA.

A signal peptide spans 1 to 27 (MVGPSRLAGGGLLLLLLLALLPLALDG). A propeptide spanning residues 28 to 83 (KPAPPPQALPKDPAAASAAERIMRALLPDSKSSRPATDRMVHPEHQAGGGDTRRLQ) is cleaved from the precursor. Disordered stretches follow at residues 54–83 (LPDS…RRLQ) and 105–127 (TSDM…PSAA). Residues 63–83 (ATDRMVHPEHQAGGGDTRRLQ) are compositionally biased toward basic and acidic residues. Cysteines 94 and 110 form a disulfide. The propeptide occupies 130–148 (AVTWLIRDLRADSKQSRAA).

This sequence belongs to the natriuretic peptide family. In terms of tissue distribution, expressed by the venom gland.

The protein localises to the secreted. In terms of biological role, natriuretic peptide that dose-dependently induces the rapid relaxation of rat aortic strips phenylephrine-precontracted. Acts by stimulating cGMP production in a dose-dependent manner (by probably activating NPR1 and/or NPR2). May also show potent hypotensive effects. The sequence is that of Natriuretic peptide BF131 from Bungarus flaviceps flaviceps (Red-headed krait).